Consider the following 222-residue polypeptide: UPF0758 protein YicR (222 aa).

The MPN domain maps to proline 100–isoleucine 222. Zn(2+)-binding residues include histidine 171, histidine 173, and aspartate 184. Residues histidine 171 to aspartate 184 carry the JAMM motif motif.

This sequence belongs to the UPF0758 family. YicR subfamily.

The polypeptide is UPF0758 protein YicR (Escherichia coli O9:H4 (strain HS)).